We begin with the raw amino-acid sequence, 130 residues long: Small ribosomal subunit protein uS9 (130 aa).

It belongs to the universal ribosomal protein uS9 family.

This is Small ribosomal subunit protein uS9 from Aromatoleum aromaticum (strain DSM 19018 / LMG 30748 / EbN1) (Azoarcus sp. (strain EbN1)).